Consider the following 2450-residue polypeptide: Tetratricopeptide repeat protein 28 (2450 aa).

Methionine 1 is modified (N-acetylmethionine). Residues 1–36 (MEQPPPLAPEPASARSRRRREPESPPAPIPLFGART) form a disordered region. A Phosphoserine modification is found at serine 24. TPR repeat units lie at residues 52–85 (FVEK…DPQN), 87–119 (ILYS…NPKW), 120–153 (PKAY…DPKS), 190–223 (FVVV…GTCS), 228–261 (GSVF…AKTL), 268–301 (CRAH…AMKL), 308–341 (SSAL…AKQS), 348–381 (AREL…AKDL), 388–421 (ARAY…AQEL), 428–461 (MRAY…AEDL), 468–501 (GRAS…AQEL), 508–541 (GRAY…SMEV), 548–581 (ASTH…AREL), 588–621 (ARAL…APDL), 628–661 (GKVC…AKDL), 668–701 (AKAY…AQSL), 708–741 (FRAL…SHHV), 748–781 (ASAY…YQEL), 788–821 (CRAH…GRKL), 828–861 (AQVY…LQQL), 871–904 (GRAY…AQSL), 911–944 (AKAY…AHEL), 951–984 (AQAY…ARDM), 991–1024 (SDAA…AEET), 1031–1064 (GRAY…AAQM), 1071–1104 (TVSY…AEQL), 1111–1144 (AKIR…FETI), and 1163–1196 (TSSY…AFAD). The tract at residues 1362–1381 (SGTVSPSKDGTSSLPRRQNS) is disordered. Phosphoserine is present on residues serine 1584 and serine 2098. The tract at residues 2001 to 2364 (KPEGGLEGGG…GTLTSKRDVL (364 aa)) is disordered. The segment covering 2090-2116 (SVSSKGSVSTPNSPVKMTLIPSPNSPF) has biased composition (polar residues). Residues 2124–2140 (SSDTGESDQSSTETDST) are compositionally biased toward low complexity. The segment covering 2143–2153 (SQEESTPKLDP) has biased composition (basic and acidic residues). The segment covering 2191–2206 (APSSTTVFRASETSAF) has biased composition (polar residues). Serine 2216 bears the Phosphoserine mark. Polar residues predominate over residues 2229–2245 (ARSSSLPKVSSPATSEV). Composition is skewed to low complexity over residues 2252–2262 (SPPGSSHPSPG) and 2296–2320 (SPAC…SPAD). Residues serine 2365 and serine 2370 each carry the phosphoserine modification.

As to quaternary structure, interacts with AURKB. In terms of tissue distribution, expressed in embryos at all stages examined. In adult tissues, detected in heart and at low levels in kidney and testis.

The protein localises to the cytoplasm. It is found in the cytoskeleton. Its subcellular location is the microtubule organizing center. It localises to the centrosome. The protein resides in the spindle. The protein localises to the spindle pole. It is found in the midbody. Functionally, during mitosis, may be involved in the condensation of spindle midzone microtubules, leading to the formation of midbody. Its function is as follows. Essential for the formation and integrity of the midbody. Max play a critical role in the progress of mitosis and cytokinesis during cell cycle. This is Tetratricopeptide repeat protein 28 (Ttc28) from Mus musculus (Mouse).